Reading from the N-terminus, the 171-residue chain is 6,7-dimethyl-8-ribityllumazine synthase (171 aa).

5-amino-6-(D-ribitylamino)uracil is bound by residues Phe24, Ala58–Glu60, and Ala82–Ile84. Glu87 to Thr88 serves as a coordination point for (2S)-2-hydroxy-3-oxobutyl phosphate. His90 serves as the catalytic Proton donor. Asn115 provides a ligand contact to 5-amino-6-(D-ribitylamino)uracil. Arg129 is a binding site for (2S)-2-hydroxy-3-oxobutyl phosphate. The segment at Ala150 to Ala171 is disordered. Over residues Leu154–Ala171 the composition is skewed to acidic residues.

Belongs to the DMRL synthase family.

It catalyses the reaction (2S)-2-hydroxy-3-oxobutyl phosphate + 5-amino-6-(D-ribitylamino)uracil = 6,7-dimethyl-8-(1-D-ribityl)lumazine + phosphate + 2 H2O + H(+). The protein operates within cofactor biosynthesis; riboflavin biosynthesis; riboflavin from 2-hydroxy-3-oxobutyl phosphate and 5-amino-6-(D-ribitylamino)uracil: step 1/2. In terms of biological role, catalyzes the formation of 6,7-dimethyl-8-ribityllumazine by condensation of 5-amino-6-(D-ribitylamino)uracil with 3,4-dihydroxy-2-butanone 4-phosphate. This is the penultimate step in the biosynthesis of riboflavin. The chain is 6,7-dimethyl-8-ribityllumazine synthase from Burkholderia ambifaria (strain ATCC BAA-244 / DSM 16087 / CCUG 44356 / LMG 19182 / AMMD) (Burkholderia cepacia (strain AMMD)).